A 403-amino-acid polypeptide reads, in one-letter code: Acetylornithine aminotransferase (403 aa).

Residues 107-108 (GA) and phenylalanine 140 each bind pyridoxal 5'-phosphate. Residue arginine 143 participates in N(2)-acetyl-L-ornithine binding. Position 225–228 (225–228 (DEVQ)) interacts with pyridoxal 5'-phosphate. Lysine 254 bears the N6-(pyridoxal phosphate)lysine mark. Serine 282 lines the N(2)-acetyl-L-ornithine pocket. Threonine 283 is a binding site for pyridoxal 5'-phosphate.

This sequence belongs to the class-III pyridoxal-phosphate-dependent aminotransferase family. ArgD subfamily. In terms of assembly, homodimer. Pyridoxal 5'-phosphate is required as a cofactor.

The protein resides in the cytoplasm. The enzyme catalyses N(2)-acetyl-L-ornithine + 2-oxoglutarate = N-acetyl-L-glutamate 5-semialdehyde + L-glutamate. It functions in the pathway amino-acid biosynthesis; L-arginine biosynthesis; N(2)-acetyl-L-ornithine from L-glutamate: step 4/4. The sequence is that of Acetylornithine aminotransferase from Vibrio cholerae serotype O1 (strain ATCC 39315 / El Tor Inaba N16961).